Reading from the N-terminus, the 449-residue chain is Chlorobenzene dioxygenase subunit alpha (449 aa).

The 110-residue stretch at 54 to 163 folds into the Rieske domain; that stretch reads WLLLGHETQI…VATYKGLIFA (110 aa). The [2Fe-2S] cluster site is built by Cys-96, His-98, Cys-116, and His-119. Fe cation-binding residues include His-222, His-228, and Asp-376.

It belongs to the bacterial ring-hydroxylating dioxygenase alpha subunit family. As to quaternary structure, this dioxygenase system consists of four proteins: the two subunits of the oxygenase component (TecA1 and TecA2), a ferredoxin (TecA3) and a ferredoxin reductase (TecA4). It depends on [2Fe-2S] cluster as a cofactor. Fe cation is required as a cofactor.

The enzyme catalyses chlorobenzene + NADH + O2 + H(+) = (1R,2R)-3-chlorocyclohexa-3,5-diene-1,2-diol + NAD(+). The protein operates within aromatic compound metabolism. Part of the oxygenase component of the chlorobenzene dioxygenase system that catalyzes the dihydroxylation of a range of aromatic compounds, including chlorinated benzenes and toluenes, and dinuclear aromatics such as biphenyl and dibenzo-p-dioxin. The alpha subunit is responsible for substrate specificity. In Cupriavidus sp. (strain PS12), this protein is Chlorobenzene dioxygenase subunit alpha.